The chain runs to 177 residues: Large ribosomal subunit protein uL6 (177 aa).

Belongs to the universal ribosomal protein uL6 family. As to quaternary structure, part of the 50S ribosomal subunit.

In terms of biological role, this protein binds to the 23S rRNA, and is important in its secondary structure. It is located near the subunit interface in the base of the L7/L12 stalk, and near the tRNA binding site of the peptidyltransferase center. This Aliivibrio fischeri (strain MJ11) (Vibrio fischeri) protein is Large ribosomal subunit protein uL6.